The primary structure comprises 303 residues: Sterol-4-alpha-carboxylate 3-dehydrogenase ERG26, decarboxylating (303 aa).

Residues 8-9 and 30-32 each bind NADP(+); these read SL and TAS. S71 contacts substrate. The disordered stretch occupies residues 77 to 96; that stretch reads PTQEPTSEENAHRYDENNAP. NADP(+) contacts are provided by residues Y102, K106, and 128-131; that span reads IPGI. Y102 lines the substrate pocket. K106 serves as the catalytic Proton donor.

This sequence belongs to the 3-beta-HSD family. In terms of assembly, heterotetramer of ERG25, ERG26, ERG27 and ERG28. ERG28 acts as a scaffold to tether ERG27 and other 4,4-demethylation-related enzymes, forming a demethylation enzyme complex, in the endoplasmic reticulum.

Its subcellular location is the endoplasmic reticulum membrane. Its pathway is steroid metabolism; ergosterol biosynthesis. Functionally, sterol-4-alpha-carboxylate 3-dehydrogenase; part of the third module of ergosterol biosynthesis pathway that includes the late steps of the pathway. ERG26 is a catalytic component of the C-4 demethylation complex that catalyzes the conversion of 4,4-dimethylfecosterol into fecosterol via 4-methylfecosterol. The third module or late pathway involves the ergosterol synthesis itself through consecutive reactions that mainly occur in the endoplasmic reticulum (ER) membrane. Firstly, the squalene synthase ERG9 catalyzes the condensation of 2 farnesyl pyrophosphate moieties to form squalene, which is the precursor of all steroids. Squalene synthase is crucial for balancing the incorporation of farnesyl diphosphate (FPP) into sterol and nonsterol isoprene synthesis. Secondly, squalene is converted into lanosterol by the consecutive action of the squalene epoxidase ERG1 and the lanosterol synthase ERG7. Then, the delta(24)-sterol C-methyltransferase ERG6 methylates lanosterol at C-24 to produce eburicol. Eburicol is the substrate of the sterol 14-alpha demethylase encoded by CYP51A, CYP51B and CYP51C, to yield 4,4,24-trimethyl ergosta-8,14,24(28)-trienol. CYP51B encodes the enzyme primarily responsible for sterol 14-alpha-demethylation, and plays an essential role in ascospore formation. CYP51A encodes an additional sterol 14-alpha-demethylase, induced on ergosterol depletion and responsible for the intrinsic variation in azole sensitivity. The third CYP51 isoform, CYP51C, does not encode a sterol 14-alpha-demethylase, but is required for full virulence on host wheat ears. The C-14 reductase ERG24 then reduces the C14=C15 double bond which leads to 4,4-dimethylfecosterol. A sequence of further demethylations at C-4, involving the C-4 demethylation complex containing the C-4 methylsterol oxidases ERG25, the sterol-4-alpha-carboxylate 3-dehydrogenase ERG26 and the 3-keto-steroid reductase ERG27, leads to the production of fecosterol via 4-methylfecosterol. ERG28 has a role as a scaffold to help anchor ERG25, ERG26 and ERG27 to the endoplasmic reticulum. The C-8 sterol isomerase ERG2 then catalyzes the reaction which results in unsaturation at C-7 in the B ring of sterols and thus converts fecosterol to episterol. The sterol-C5-desaturases ERG3A and ERG3BB then catalyze the introduction of a C-5 double bond in the B ring to produce 5-dehydroepisterol. The C-22 sterol desaturases ERG5A and ERG5B further convert 5-dehydroepisterol into ergosta-5,7,22,24(28)-tetraen-3beta-ol by forming the C-22(23) double bond in the sterol side chain. Finally, ergosta-5,7,22,24(28)-tetraen-3beta-ol is substrate of the C-24(28) sterol reductase ERG4 to produce ergosterol. This is Sterol-4-alpha-carboxylate 3-dehydrogenase ERG26, decarboxylating from Gibberella zeae (strain ATCC MYA-4620 / CBS 123657 / FGSC 9075 / NRRL 31084 / PH-1) (Wheat head blight fungus).